The primary structure comprises 539 residues: Membrane protein insertase YidC (539 aa).

Helical transmembrane passes span 6–26 (TLLV…WQVA), 341–361 (SVIQ…TFIV), 416–436 (LGGC…YWAL), 454–474 (LSAQ…MFLI), and 495–515 (PVMF…YWLV).

The protein belongs to the OXA1/ALB3/YidC family. Type 1 subfamily. As to quaternary structure, interacts with the Sec translocase complex via SecD. Specifically interacts with transmembrane segments of nascent integral membrane proteins during membrane integration.

The protein localises to the cell inner membrane. In terms of biological role, required for the insertion and/or proper folding and/or complex formation of integral membrane proteins into the membrane. Involved in integration of membrane proteins that insert both dependently and independently of the Sec translocase complex, as well as at least some lipoproteins. Aids folding of multispanning membrane proteins. This chain is Membrane protein insertase YidC, found in Vibrio vulnificus (strain YJ016).